Here is a 443-residue protein sequence, read N- to C-terminus: Thymidine phosphorylase (443 aa).

The protein belongs to the thymidine/pyrimidine-nucleoside phosphorylase family. In terms of assembly, homodimer.

The enzyme catalyses thymidine + phosphate = 2-deoxy-alpha-D-ribose 1-phosphate + thymine. It participates in pyrimidine metabolism; dTMP biosynthesis via salvage pathway; dTMP from thymine: step 1/2. In terms of biological role, the enzymes which catalyze the reversible phosphorolysis of pyrimidine nucleosides are involved in the degradation of these compounds and in their utilization as carbon and energy sources, or in the rescue of pyrimidine bases for nucleotide synthesis. The chain is Thymidine phosphorylase from Shewanella frigidimarina (strain NCIMB 400).